A 1057-amino-acid chain; its full sequence is Atrial natriuretic peptide receptor 1 (1057 aa).

A signal peptide spans 1-28 (MPGSRRVRPRLRALLLLPPLLLLRSGHA). At 29–469 (SDLTVAVVLP…CNQDHFSTLE (441 aa)) the chain is on the extracellular side. Asparagine 41 carries an N-linked (GlcNAc...) asparagine glycan. Residues serine 81, glycine 113, and cysteine 114 each coordinate chloride. 2 disulfides stabilise this stretch: cysteine 88–cysteine 114 and cysteine 192–cysteine 241. Residues asparagine 208, asparagine 334, asparagine 375, asparagine 382, and asparagine 423 are each glycosylated (N-linked (GlcNAc...) asparagine). Cysteine 451 and cysteine 460 form a disulfide bridge. The helical transmembrane segment at 470-490 (VLALVGSLSLVSFLIVSFFIY) threads the bilayer. Residues 491 to 1057 (RKMQLEKELV…LGERGCSTRG (567 aa)) lie on the Cytoplasmic side of the membrane. Phosphoserine occurs at positions 515 and 525. The region spanning 524 to 801 (GSRLTLSGRG…QIRLALRKFN (278 aa)) is the Protein kinase domain. The residue at position 528 (threonine 528) is a Phosphothreonine. 3 positions are modified to phosphoserine: serine 530, serine 534, and serine 538. Residue threonine 541 is modified to Phosphothreonine. A Guanylate cyclase domain is found at 872–1002 (TIYFSDIVGF…DTVNTASRME (131 aa)).

This sequence belongs to the adenylyl cyclase class-4/guanylyl cyclase family. In terms of assembly, homodimer. In terms of processing, phosphorylation of the protein kinase-like domain is required for full activation by ANP.

It localises to the membrane. The enzyme catalyses GTP = 3',5'-cyclic GMP + diphosphate. Functionally, receptor for the atrial natriuretic peptide NPPA/ANP and the brain natriuretic peptide NPPB/BNP which are potent vasoactive hormones playing a key role in cardiovascular homeostasis. Plays an essential role in the regulation of endothelial cell senescence and vascular aging. Upon activation by ANP or BNP, stimulates the production of cyclic guanosine monophosphate (cGMP) that promotes vascular tone and volume homeostasis by activation of protein kinase cGMP-dependent 1/PRKG1 and subsequently PRKAA1, thereby controlling blood pressure and maintaining cardiovascular homeostasis. The sequence is that of Atrial natriuretic peptide receptor 1 (Npr1) from Mus musculus (Mouse).